The primary structure comprises 170 residues: ATP synthase subunit b (170 aa).

Residues 11-31 (AFTFGDAFFTLFAFAILLVLI) form a helical membrane-spanning segment.

This sequence belongs to the ATPase B chain family. F-type ATPases have 2 components, F(1) - the catalytic core - and F(0) - the membrane proton channel. F(1) has five subunits: alpha(3), beta(3), gamma(1), delta(1), epsilon(1). F(0) has three main subunits: a(1), b(2) and c(10-14). The alpha and beta chains form an alternating ring which encloses part of the gamma chain. F(1) is attached to F(0) by a central stalk formed by the gamma and epsilon chains, while a peripheral stalk is formed by the delta and b chains.

The protein resides in the cell membrane. F(1)F(0) ATP synthase produces ATP from ADP in the presence of a proton or sodium gradient. F-type ATPases consist of two structural domains, F(1) containing the extramembraneous catalytic core and F(0) containing the membrane proton channel, linked together by a central stalk and a peripheral stalk. During catalysis, ATP synthesis in the catalytic domain of F(1) is coupled via a rotary mechanism of the central stalk subunits to proton translocation. Functionally, component of the F(0) channel, it forms part of the peripheral stalk, linking F(1) to F(0). In Listeria innocua serovar 6a (strain ATCC BAA-680 / CLIP 11262), this protein is ATP synthase subunit b.